The primary structure comprises 112 residues: Protein BEX3 (112 aa).

Residues 1 to 45 (MANIHQENEEMEQPVQNGEEDRPLGGGEGHQPERNHRRGQARRLA) form a disordered region. The segment at 69–94 (EIFMEEMREIRRKLRELQLRNCLRIL) is interaction with p75NTR/NGFR. Positions 69-112 (EIFMEEMREIRRKLRELQLRNCLRILMGELSNHHDHHDEFCLMP) are interaction with 14-3-3 epsilon. The Nuclear export signal signature appears at 78–88 (IRRKLRELQLR). The tract at residues 101–105 (HHDHH) is his cluster. Residue Cys109 coordinates Zn(2+).

The protein belongs to the BEX family. As to quaternary structure, self-associates. Binds to the DEATH domain of p75NTR/NGFR. Interacts with 14-3-3 epsilon (YWHAE). Interacts with DIABLO/SMAC. Ubiquitinated. Degraded by the proteasome.

The protein localises to the nucleus. It is found in the cytoplasm. It localises to the cytosol. May be a signaling adapter molecule involved in NGFR/p75NTR-mediated apoptosis induced by NGF. Plays a role in zinc-triggered neuronal death. In absence of reductive stress, acts as a pseudosubstrate for the CRL2(FEM1B) complex: associates with FEM1B via zinc, thereby preventing association between FEM1B and its substrates. This Bos taurus (Bovine) protein is Protein BEX3.